Reading from the N-terminus, the 227-residue chain is Urease accessory protein UreF (227 aa).

Belongs to the UreF family. UreD, UreF and UreG form a complex that acts as a GTP-hydrolysis-dependent molecular chaperone, activating the urease apoprotein by helping to assemble the nickel containing metallocenter of UreC. The UreE protein probably delivers the nickel.

The protein resides in the cytoplasm. In terms of biological role, required for maturation of urease via the functional incorporation of the urease nickel metallocenter. The chain is Urease accessory protein UreF from Shewanella halifaxensis (strain HAW-EB4).